The primary structure comprises 378 residues: Cytochrome b (378 aa).

4 helical membrane passes run 34–54, 78–99, 114–134, and 179–199; these read FGSLLGLCLIIQILTGLFLAM, WLLRTLHANGASFFFICIYLHV, WLIGVIILFLVMGTAFMGYVL, and FFTFHFILPFIVLAMTMIHLL. Heme b is bound by residues His-84 and His-98. The heme b site is built by His-183 and His-197. His-202 provides a ligand contact to a ubiquinone. The next 4 helical transmembrane spans lie at 227–247, 289–309, 321–341, and 348–368; these read FKDIVGFIVMIFILISLVLIS, LGGVIALVLSIAILMILPFYN, INQVMFWSMLVTVILLTWIGA, and YVLIGQILTVVYFLYYLVNPL.

Belongs to the cytochrome b family. As to quaternary structure, the main subunits of complex b-c1 are: cytochrome b, cytochrome c1 and the Rieske protein. Requires heme b as cofactor.

The protein resides in the mitochondrion inner membrane. Functionally, component of the ubiquinol-cytochrome c reductase complex (complex III or cytochrome b-c1 complex) that is part of the mitochondrial respiratory chain. The b-c1 complex mediates electron transfer from ubiquinol to cytochrome c. Contributes to the generation of a proton gradient across the mitochondrial membrane that is then used for ATP synthesis. The sequence is that of Cytochrome b (mt:Cyt-b) from Drosophila mauritiana (Fruit fly).